Here is a 357-residue protein sequence, read N- to C-terminus: MFLERLSPIESKIKILEEKLQDTNLIKNQKEYAKVIKEYNYLEKIKEKKDEYENIISQIDENQKILSEEENLEMKELIKQELTHLNLKKDEIEHTIKILLLHQDENDNKNIIIEIRAGTGGEEAALFAHNLYEMYTKYSEKKKWKTELINFNETELGGFKEVSFEIKGKEVFKKLKHESGVHRVQRVPITESNGRLQTSAATVAVLPEVEETDIEINEKDLRIDVYRSSGAGGQHVNTTDSAVRITHLPTGIVVQCQNERSQHKNKDQAMKILRARLYKFEDLKKQEQRSNDRKQQVGSGDRSERIRTYNFPQNRVTEHRANISLYKLEEIMQGELDLLLDTLALKLQEQALKDNPI.

Q234 carries the post-translational modification N5-methylglutamine. The span at 284-307 (KKQEQRSNDRKQQVGSGDRSERIR) shows a compositional bias: basic and acidic residues. Residues 284–313 (KKQEQRSNDRKQQVGSGDRSERIRTYNFPQ) are disordered.

It belongs to the prokaryotic/mitochondrial release factor family. Methylated by PrmC. Methylation increases the termination efficiency of RF1.

It localises to the cytoplasm. Peptide chain release factor 1 directs the termination of translation in response to the peptide chain termination codons UAG and UAA. The polypeptide is Peptide chain release factor 1 (Borrelia turicatae (strain 91E135)).